The sequence spans 150 residues: Large ribosomal subunit protein bL9 (150 aa).

The protein belongs to the bacterial ribosomal protein bL9 family.

In terms of biological role, binds to the 23S rRNA. This is Large ribosomal subunit protein bL9 from Lactiplantibacillus plantarum (strain ATCC BAA-793 / NCIMB 8826 / WCFS1) (Lactobacillus plantarum).